A 290-amino-acid chain; its full sequence is Small ribosomal subunit protein uS2 (290 aa).

Positions 269–290 (WEAEASGDWAAESAQPNPETKW) are disordered.

This sequence belongs to the universal ribosomal protein uS2 family. Component of the small ribosomal subunit. Mature ribosomes consist of a small (40S) and a large (60S) subunit. The 40S subunit contains about 33 different proteins and 1 molecule of RNA (18S). The 60S subunit contains about 49 different proteins and 3 molecules of RNA (25S, 5.8S and 5S). Interacts with rps21.

The protein localises to the cytoplasm. Functionally, required for the assembly and/or stability of the 40S ribosomal subunit. Required for the processing of the 20S rRNA-precursor to mature 18S rRNA in a late step of the maturation of 40S ribosomal subunits. This is Small ribosomal subunit protein uS2 (rps0) from Talaromyces marneffei (strain ATCC 18224 / CBS 334.59 / QM 7333) (Penicillium marneffei).